The following is a 161-amino-acid chain: Ribonuclease H (161 aa).

In terms of domain architecture, RNase H type-1 spans 3 to 144; the sequence is GLKQISIYTD…CDDLARQAAE (142 aa). Mg(2+) contacts are provided by D12, E50, D72, and D136. Residues 133 to 161 are disordered; sequence ERCDDLARQAAEAKPSQEDSGYINQQAQA. The segment covering 150–161 has biased composition (polar residues); that stretch reads EDSGYINQQAQA.

The protein belongs to the RNase H family. Monomer. Mg(2+) is required as a cofactor.

It localises to the cytoplasm. The catalysed reaction is Endonucleolytic cleavage to 5'-phosphomonoester.. Its function is as follows. Endonuclease that specifically degrades the RNA of RNA-DNA hybrids. This is Ribonuclease H from Shewanella halifaxensis (strain HAW-EB4).